The primary structure comprises 184 residues: Endoribonuclease YbeY (184 aa).

Residues His151, His155, and His161 each contribute to the Zn(2+) site.

This sequence belongs to the endoribonuclease YbeY family. Zn(2+) is required as a cofactor.

It localises to the cytoplasm. Its function is as follows. Single strand-specific metallo-endoribonuclease involved in late-stage 70S ribosome quality control and in maturation of the 3' terminus of the 16S rRNA. The sequence is that of Endoribonuclease YbeY from Prochlorococcus marinus (strain NATL2A).